The chain runs to 359 residues: RuBisCO accumulation factor 1 (359 aa).

Residues 12–195 (LSPEETDALF…RQKIEQLLSD (184 aa)) are N-terminal alpha-helix. Residues 219-345 (PLLIPVAGSL…VLLVMRPKKI (127 aa)) are C-terminal beta-sheet.

The protein belongs to the RAF family. Homodimer. Forms an RbcL(8)-Raf1(8) complex. Forms complexes of many stoichiometries with RbcL with and without RbcS. RbcX and Raf1 can bind simultaneously to RbcL.

The protein resides in the cytoplasm. Its function is as follows. A major RuBisCO chaperone. Acts after GroEL-GroES chaperonin to fold and/or assemble the large subunit of RuBisCO (ccbL, rbcL). Cooperates with RbcX in RbcL folding, plays the major role in assembly of dimers into RbcL(8)-Raf1(8) intermediate complexes. RbcS replaces Raf1, leading to holoenzyme formation. Functionally, raf1 and RbcX are probably functionally redundant; it has been suggested they may cooperate. The protein is RuBisCO accumulation factor 1 of Picosynechococcus sp. (strain ATCC 27264 / PCC 7002 / PR-6) (Agmenellum quadruplicatum).